The primary structure comprises 258 residues: UPF0246 protein IL2146 (258 aa).

The protein belongs to the UPF0246 family.

This is UPF0246 protein IL2146 from Idiomarina loihiensis (strain ATCC BAA-735 / DSM 15497 / L2-TR).